Reading from the N-terminus, the 298-residue chain is tRNA pseudouridine synthase A (298 aa).

The active-site Nucleophile is aspartate 56. Tyrosine 125 is a binding site for substrate.

The protein belongs to the tRNA pseudouridine synthase TruA family. In terms of assembly, homodimer.

The catalysed reaction is uridine(38/39/40) in tRNA = pseudouridine(38/39/40) in tRNA. Formation of pseudouridine at positions 38, 39 and 40 in the anticodon stem and loop of transfer RNAs. In Bifidobacterium animalis subsp. lactis (strain AD011), this protein is tRNA pseudouridine synthase A.